We begin with the raw amino-acid sequence, 371 residues long: Lombricine kinase (371 aa).

A Phosphagen kinase N-terminal domain is found at 1 to 86 (MPKFTARQNF…FDAVINEKHG (86 aa)). Residues 113 to 355 (YVKSARIRTG…GKLIEYEKLL (243 aa)) form the Phosphagen kinase C-terminal domain. ATP is bound by residues 116 to 120 (SARIR), H179, R224, R280, 308 to 313 (RGTGGE), and D323.

It belongs to the ATP:guanido phosphotransferase family. Homodimer.

It carries out the reaction L-lombricine + ATP = N-phospho-L-lombricine + ADP + H(+). This chain is Lombricine kinase, found in Eisenia fetida (Red wiggler worm).